The chain runs to 690 residues: UvrABC system protein B (690 aa).

The Helicase ATP-binding domain occupies 39-422 (EGLDDGLSFQ…EQQHAGQVVE (384 aa)). An ATP-binding site is contributed by 52-59 (GVTGSGKT). A Beta-hairpin motif is present at residues 105–128 (YYDYYQPEAYVPSRDLFIEKDSSI). The Helicase C-terminal domain occupies 443–596 (QVDDLLAEIG…QIAFNLEHGI (154 aa)). The 36-residue stretch at 640 to 675 (AREIKRLEKSMMECAKNLEFEKAAAARDDLFRLRER) folds into the UVR domain.

It belongs to the UvrB family. In terms of assembly, forms a heterotetramer with UvrA during the search for lesions. Interacts with UvrC in an incision complex.

It is found in the cytoplasm. In terms of biological role, the UvrABC repair system catalyzes the recognition and processing of DNA lesions. A damage recognition complex composed of 2 UvrA and 2 UvrB subunits scans DNA for abnormalities. Upon binding of the UvrA(2)B(2) complex to a putative damaged site, the DNA wraps around one UvrB monomer. DNA wrap is dependent on ATP binding by UvrB and probably causes local melting of the DNA helix, facilitating insertion of UvrB beta-hairpin between the DNA strands. Then UvrB probes one DNA strand for the presence of a lesion. If a lesion is found the UvrA subunits dissociate and the UvrB-DNA preincision complex is formed. This complex is subsequently bound by UvrC and the second UvrB is released. If no lesion is found, the DNA wraps around the other UvrB subunit that will check the other stand for damage. The protein is UvrABC system protein B of Dechloromonas aromatica (strain RCB).